A 164-amino-acid polypeptide reads, in one-letter code: UPF0114 protein Sbal_0780 (164 aa).

4 helical membrane-spanning segments follow: residues 15-35, 53-73, 109-129, and 136-156; these read IMAPIYLGLSLILFALGVKFF, LVLLTLSLIDITLVGGLIVMV, VAASIVAISSIHLLKVFMNAE, and IMWYLLIHITFVLSAFAMGYL.

It belongs to the UPF0114 family.

Its subcellular location is the cell membrane. The sequence is that of UPF0114 protein Sbal_0780 from Shewanella baltica (strain OS155 / ATCC BAA-1091).